We begin with the raw amino-acid sequence, 269 residues long: Phosphatidylglycerophosphate phosphatase 1, chloroplastic (269 aa).

The transit peptide at 1–33 (MRSVPGPSPPCTRSLAHSCRAAARGPCGSARPR) directs the protein to the chloroplast. The disordered stretch occupies residues 25-46 (GPCGSARPRARSVSARAHSSEA). Over residues 29–46 (SARPRARSVSARAHSSEA) the composition is skewed to low complexity. The Phosphoryl acceptor motif lies at 103–107 (DKDNT).

This sequence belongs to the HAD-like hydrolase superfamily.

It is found in the plastid. Its subcellular location is the chloroplast. The enzyme catalyses a 1,2-diacyl-sn-glycero-3-phospho-(1'-sn-glycero-3'-phosphate) + H2O = a 1,2-diacyl-sn-glycero-3-phospho-(1'-sn-glycerol) + phosphate. The protein operates within phospholipid metabolism; phosphatidylglycerol biosynthesis; phosphatidylglycerol from CDP-diacylglycerol: step 2/2. In terms of biological role, phosphatidylglycerophosphate phosphatase involved in the biosynthesis of phosphatidylglycerol (PG), a phosphoglycerolipid predominantly present in chloroplastic thylakoid membranes and which has important photosynthetic function. Required for thylakoid membranes development and chloroplast function. The protein is Phosphatidylglycerophosphate phosphatase 1, chloroplastic of Chlamydomonas reinhardtii (Chlamydomonas smithii).